The chain runs to 242 residues: MKVSLFITCLSDVFFPQVGKSVVEIMNQCGVELDFPEGQTCCGQPAYNSGYQEDAKLAAKQMIKAFEHSEYIVTPSGSCASMVHHYYKEMFKGDSEWYEKAVHLADRTYELTDFLVNVLGKNDWKSKLVEKAVFHQSCHMSRALGIKEEPLKLLSQVEGLDIKELPYCQDCCGFGGTFAVKMSSISETMVDEKIKHIEATEANLLIGADMGCLMNIGGRLRRKNKNIQVLHVAEVLAKGLNK.

It belongs to the LutA/YkgE family.

Its function is as follows. Is involved in L-lactate degradation and allows cells to grow with lactate as the sole carbon source. The chain is Lactate utilization protein A 2 from Bacillus cereus (strain 03BB102).